A 651-amino-acid polypeptide reads, in one-letter code: MAPHVEQLEFQAEARQLLDLMIHSVYSNKDSFLRELISNASDALDKLRLEAFRNKDLDVDTSDLHIEIVVDKEARTLTVRDNGIGMSRDEVVRLIGTLAKSGTAELRQQLREAKDANANEELIGQFGIGFYASFMVADRVELLTRKAGESEATRWESTGEGSYTIETVDQAGGEVPQGTSVTLHLKPEDREDELHDYTSEWKIRELVKQYSDFIAWPVRMDVERRTPASEEGGEETVTVETQTLNSMKALWARPRDEVSDEEYTEFYKHVAHAWDEPLETIAMRAEGTFEYQALLFIPSHAPFDLFQQNATVGVQLYVKRVFIMGDCDQLMPPYLRFVKGVVDAQDMSLNVSREILQQDRQIRAIRRRLTKKVLSTIAEMQAERPEKYRTFWTQFGRVLKEGLLSDTDNQETLLRVSSFASTRSDDEPTTLAEYVERMPEGQTQIFYAAGESRQQLLNSPHLEAFKAKGYEVLLLTDPVDEVWVESIHEFDGKPLQSVAKGEVDLDSEADKEAQETERQQREKEFADVIAWLTEVLGDHVKEVRLSTRLTDSPACLITDTFGITPALARMYRASGQPVPVEKRILELNPTHPLVVGLREAHESRGADDELAGTAELLYGTALLAEGGALEDPARFAGLLADRLTRMVGEQS.

The a; substrate-binding stretch occupies residues 1–353; sequence MAPHVEQLEF…AQDMSLNVSR (353 aa). The segment at 354-569 is b; that stretch reads EILQQDRQIR…TFGITPALAR (216 aa). The segment at 570–651 is c; it reads MYRASGQPVP…RLTRMVGEQS (82 aa).

Belongs to the heat shock protein 90 family. In terms of assembly, homodimer.

Its subcellular location is the cytoplasm. In terms of biological role, molecular chaperone. Has ATPase activity. This Mycolicibacterium gilvum (strain PYR-GCK) (Mycobacterium gilvum (strain PYR-GCK)) protein is Chaperone protein HtpG.